Consider the following 418-residue polypeptide: MEKTQSVFIRFIVNGSLVKQILIGLVAGIVLALVSTPAAIAVGLLGSLFVGALKAVAPVLVLMLVIASIANHKKGQKTSIRPILFLYVLGAFSAALVAVVVSFIYPSTLILVAESADITPPSGIVEVLHGLLNSIIANPIHALLNANYIGILAWAVGLGIALRHAADTTKALINDMSDAVTLVVRVVIRFAPLGIFGLVASTIAATGFGALQLYVQLLVVLIGCMLLVALVVNPLIVYWKIRRNPYPLVFACLRESGVTAFFTRSSAANIPVNMEMCKKMNLNEDTYSISIPLGATINMAGAAITITVLTLAAVHTLGITVDLPTALLLSVVAAVCACGASGVAGGSLLLIPLACSMFGIPNDVAMQVVGVGFIIGVLQDSAETALNSSTDVLFTAAVCQAEDAKLANPDALAAGKSV.

The next 8 membrane-spanning stretches (helical) occupy residues 21–41, 49–69, 83–103, 142–162, 190–210, 217–237, 299–319, and 331–351; these read ILIGLVAGIVLALVSTPAAIA, FVGALKAVAPVLVLMLVIASI, ILFLYVLGAFSAALVAVVVSF, ALLNANYIGILAWAVGLGIAL, FAPLGIFGLVASTIAATGFGA, LLVVLIGCMLLVALVVNPLIV, MAGAAITITVLTLAAVHTLGI, and VVAAVCACGASGVAGGSLLLI.

This sequence belongs to the dicarboxylate/amino acid:cation symporter (DAACS) (TC 2.A.23) family.

The protein localises to the cell inner membrane. It catalyses the reaction L-serine(in) + Na(+)(in) = L-serine(out) + Na(+)(out). It carries out the reaction L-threonine(in) + Na(+)(in) = L-threonine(out) + Na(+)(out). In terms of biological role, involved in the import of serine and threonine into the cell, with the concomitant import of sodium (symport system). This chain is Serine/threonine transporter SstT, found in Yersinia pseudotuberculosis serotype O:1b (strain IP 31758).